Reading from the N-terminus, the 65-residue chain is Ovary maturating parsin (65 aa).

Over residues 17–28 the composition is skewed to low complexity; sequence PAAPAVAPAAPA. The disordered stretch occupies residues 17–36; sequence PAAPAVAPAAPASWPHQQRR.

In terms of assembly, monomer.

Functionally, neurohormone that anticipates ovarian maturation. Acts as a true gonadotropin and stimulates vitellogenin biosynthesis. This Locusta migratoria (Migratory locust) protein is Ovary maturating parsin.